The sequence spans 1145 residues: Adenylate cyclase type 3 (1145 aa).

At 1–79 (MPRNQGFSDP…FKRQRHETLL (79 aa)) the chain is on the cytoplasmic side. The next 5 helical transmembrane spans lie at 80 to 100 (VLVVFAALFDCYVVVMCAVVF), 105 to 125 (LAPLMVAGFGLVLDIILFVLC), 139 to 159 (VPYLLWLLISAQIFSYLGLNF), 173 to 193 (AFFVFSFFITLPLSLSPIVII), and 226 to 246 (ILANVFLYLCAIIVGIMSYYM). Positions 324, 325, and 368 each coordinate Mg(2+). Residues 324 to 329 (DIVGFT) and 366 to 368 (LGD) each bind ATP. A helical transmembrane segment spans residues 381–401 (EDHAVCSILMGLAMVEAISYV). Residues 402-631 (REKTKTGVDM…RYSVEKEKQS (230 aa)) lie on the Cytoplasmic side of the membrane. R412 is an ATP binding site. Residue K465 forms a Glycyl lysine isopeptide (Lys-Gly) (interchain with G-Cter in SUMO3) linkage. Residues 504–564 (QNGLNGSAVP…DNPSFPNPRR (61 aa)) are disordered. Composition is skewed to low complexity over residues 516–526 (APASSKPSSPA) and 535–544 (GSAHASGSTS). Phosphoserine is present on S524. S579 is subject to Phosphoserine. Transmembrane regions (helical) follow at residues 632-652 (GAAFSCSCVVLFCTAMVEILI), 663-683 (FVVGEVLLLILTICSMAAIFP), and 707-727 (WAMLAIFILVMANVVDMLSCL). A glycan (N-linked (GlcNAc...) asparagine) is linked at N735. 3 helical membrane passes run 753–773 (YNYVAVLSLIATIMLVQVSHM), 774–794 (VKLTLMLLVTGAVTALNLYAW), and 834–854 (LPLVPSKYSMTVMMFVMMLSF). The Cytoplasmic portion of the chain corresponds to 855 to 1145 (YYFSRHVEKL…TLPHQVVDNP (291 aa)). Residues K976, 1063 to 1065 (DIW), and 1070 to 1074 (NVASR) each bind ATP. S1077 is modified (phosphoserine; by CaMK2). K1110 serves as a coordination point for ATP.

It belongs to the adenylyl cyclase class-4/guanylyl cyclase family. The cofactor is Mg(2+). Mn(2+) serves as cofactor. In terms of processing, N-glycosylated. Post-translationally, rapidly phosphorylated after stimulation by odorants or forskolin. Phosphorylation by CaMK2 at Ser-1077 down-regulates enzyme activity. Sumoylated. Sumoylation is required for targeting of olfactory cilia. In terms of tissue distribution, detected in the acrosomal region of epididymal spermatozoa, the acrosomal region of round spermatids and in elongating spermatids. Detected in cilia in the olfactory epithelium (at protein level). Detected in olfactory epithelium neurons. Detected in brain, testis, late pachytene spermatocytes, round spermatids and elongating spermatids.

It localises to the cell membrane. It is found in the cell projection. The protein resides in the cilium. The protein localises to the golgi apparatus. Its subcellular location is the cytoplasm. The enzyme catalyses ATP = 3',5'-cyclic AMP + diphosphate. With respect to regulation, specifically activated by the G alpha protein GNAL/G(olf) in signaling cascades triggered by odorant receptors. Activated by forskolin. After forskolin treatment, activity is further increased by calcium/calmodulin. In the absence of forskolin, calcium/calmodulin has little effect on enzyme activity. Functionally, catalyzes the formation of the signaling molecule cAMP in response to G-protein signaling. Participates in signaling cascades triggered by odorant receptors via its function in cAMP biosynthesis: specifically activated by G alpha protein GNAL/G(olf) in olfactory epithelium. Required for the perception of odorants. Required for normal sperm motility and normal male fertility. Plays a role in regulating insulin levels and body fat accumulation in response to a high fat diet. This chain is Adenylate cyclase type 3 (Adcy3), found in Mus musculus (Mouse).